Consider the following 132-residue polypeptide: Small ribosomal subunit protein uS8 (132 aa).

Belongs to the universal ribosomal protein uS8 family. As to quaternary structure, part of the 30S ribosomal subunit. Contacts proteins S5 and S12.

Its function is as follows. One of the primary rRNA binding proteins, it binds directly to 16S rRNA central domain where it helps coordinate assembly of the platform of the 30S subunit. This Clostridium perfringens (strain ATCC 13124 / DSM 756 / JCM 1290 / NCIMB 6125 / NCTC 8237 / Type A) protein is Small ribosomal subunit protein uS8.